Here is a 91-residue protein sequence, read N- to C-terminus: Large ribosomal subunit protein bL27 (91 aa).

The tract at residues 1 to 26 (MAHKKGVGSSRNGRDSNPKMRGVKRF) is disordered.

This sequence belongs to the bacterial ribosomal protein bL27 family.

This chain is Large ribosomal subunit protein bL27, found in Chloroflexus aurantiacus (strain ATCC 29366 / DSM 635 / J-10-fl).